Reading from the N-terminus, the 344-residue chain is Anthranilate phosphoribosyltransferase (344 aa).

5-phospho-alpha-D-ribose 1-diphosphate-binding positions include G84, 87 to 88 (GD), T92, 94 to 97 (NIST), 112 to 120 (KHGNRSVSS), and S124. Position 84 (G84) interacts with anthranilate. S96 contributes to the Mg(2+) binding site. Position 115 (N115) interacts with anthranilate. Position 170 (R170) interacts with anthranilate. Mg(2+) contacts are provided by D229 and E230.

It belongs to the anthranilate phosphoribosyltransferase family. Homodimer. Mg(2+) is required as a cofactor.

It carries out the reaction N-(5-phospho-beta-D-ribosyl)anthranilate + diphosphate = 5-phospho-alpha-D-ribose 1-diphosphate + anthranilate. It participates in amino-acid biosynthesis; L-tryptophan biosynthesis; L-tryptophan from chorismate: step 2/5. Its function is as follows. Catalyzes the transfer of the phosphoribosyl group of 5-phosphorylribose-1-pyrophosphate (PRPP) to anthranilate to yield N-(5'-phosphoribosyl)-anthranilate (PRA). This Xylella fastidiosa (strain M23) protein is Anthranilate phosphoribosyltransferase.